The following is a 459-amino-acid chain: 4,4'-diaponeurosporen-aldehyde dehydrogenase (459 aa).

Residues F114–N115 and G188–S189 each bind NAD(+). E210 acts as the Proton acceptor in catalysis. M211 lines the NAD(+) pocket. C244 functions as the Nucleophile in the catalytic mechanism. Residue E336 participates in NAD(+) binding.

It belongs to the aldehyde dehydrogenase family.

It carries out the reaction 4,4'-diaponeurosporenal + NAD(+) + H2O = 4,4'-diaponeurosporenoate + NADH + 2 H(+). Its pathway is carotenoid biosynthesis; staphyloxanthin biosynthesis; staphyloxanthin from farnesyl diphosphate. Involved in the biosynthesis of the yellow-orange carotenoid staphyloxanthin, which plays a role in the virulence via its protective function against oxidative stress. Catalyzes the oxidation of 4,4'-diaponeurosporen-4-al to yield 4,4'-diaponeurosporenoic acid. In Staphylococcus aureus (strain NCTC 8325 / PS 47), this protein is 4,4'-diaponeurosporen-aldehyde dehydrogenase.